Reading from the N-terminus, the 884-residue chain is Probable DNA-directed RNA polymerase subunit beta (884 aa).

This sequence belongs to the RNA polymerase beta chain family.

The catalysed reaction is RNA(n) + a ribonucleoside 5'-triphosphate = RNA(n+1) + diphosphate. Its function is as follows. Required for late and very late gene expression. May be a component of the novel RNA polymerase activity induced by baculovirus infection. This Orgyia pseudotsugata multicapsid polyhedrosis virus (OpMNPV) protein is Probable DNA-directed RNA polymerase subunit beta (LEF-8).